Consider the following 418-residue polypeptide: Gamma-glutamyl phosphate reductase (418 aa).

The protein belongs to the gamma-glutamyl phosphate reductase family.

It is found in the cytoplasm. It carries out the reaction L-glutamate 5-semialdehyde + phosphate + NADP(+) = L-glutamyl 5-phosphate + NADPH + H(+). The protein operates within amino-acid biosynthesis; L-proline biosynthesis; L-glutamate 5-semialdehyde from L-glutamate: step 2/2. Functionally, catalyzes the NADPH-dependent reduction of L-glutamate 5-phosphate into L-glutamate 5-semialdehyde and phosphate. The product spontaneously undergoes cyclization to form 1-pyrroline-5-carboxylate. This chain is Gamma-glutamyl phosphate reductase, found in Desulfosudis oleivorans (strain DSM 6200 / JCM 39069 / Hxd3) (Desulfococcus oleovorans).